The sequence spans 542 residues: Protein phosphatase 1G (542 aa).

Glycine 2 carries N-myristoyl glycine lipidation. An Omega-N-methylarginine modification is found at arginine 22. The PPM-type phosphatase domain maps to 26 to 502 (PYGFSAMQGW…DNMTCIIICF (477 aa)). Mn(2+)-binding residues include aspartate 60 and glycine 61. 2 disordered regions span residues 117–136 (IAGR…DEDD) and 164–325 (CQKV…SDSG). The residue at position 122 (threonine 122) is a Phosphothreonine. Acidic residues-rich tracts occupy residues 123 to 136 (EDED…DEDD) and 259 to 309 (DSED…DEEM). Lysine 380 is subject to N6-acetyllysine. Residues aspartate 438 and aspartate 493 each coordinate Mn(2+). The segment at 513–542 (ESGKRKLEEALSTEGAEDTGNSDKKKAKRD) is disordered. Serine 524 carries the phosphoserine modification.

This sequence belongs to the PP2C family. Interacts with NOL3; may dephosphorylate NOL3. Mg(2+) is required as a cofactor. Requires Mn(2+) as cofactor. Highly expressed in testis. Low level of expression in kidney. Also expressed in a number of tissues undergoing proliferation including embryo, uterus at pregnancy, placenta, and ovaries.

The protein resides in the nucleus. It is found in the membrane. It catalyses the reaction O-phospho-L-seryl-[protein] + H2O = L-seryl-[protein] + phosphate. The enzyme catalyses O-phospho-L-threonyl-[protein] + H2O = L-threonyl-[protein] + phosphate. Its function is as follows. May be involved in regulation of cell cycle. In Mus musculus (Mouse), this protein is Protein phosphatase 1G (Ppm1g).